Here is a 204-residue protein sequence, read N- to C-terminus: Holliday junction branch migration complex subunit RuvA (204 aa).

Residues 1–67 (MIDYLYGTLD…GGVISLYGFF (67 aa)) form a domain I region. The domain II stretch occupies residues 68–149 (TIEEREMYLL…TVNVLNKEKQ (82 aa)). Residues 150–154 (TGAET) form a flexible linker region. The segment at 155-204 (IKNTMVSEAIAGLITLGYKMQQARVAVTNVYEHNENITLEDLIKKSLQYL) is domain III.

It belongs to the RuvA family. Homotetramer. Forms an RuvA(8)-RuvB(12)-Holliday junction (HJ) complex. HJ DNA is sandwiched between 2 RuvA tetramers; dsDNA enters through RuvA and exits via RuvB. An RuvB hexamer assembles on each DNA strand where it exits the tetramer. Each RuvB hexamer is contacted by two RuvA subunits (via domain III) on 2 adjacent RuvB subunits; this complex drives branch migration. In the full resolvosome a probable DNA-RuvA(4)-RuvB(12)-RuvC(2) complex forms which resolves the HJ.

The protein localises to the cytoplasm. In terms of biological role, the RuvA-RuvB-RuvC complex processes Holliday junction (HJ) DNA during genetic recombination and DNA repair, while the RuvA-RuvB complex plays an important role in the rescue of blocked DNA replication forks via replication fork reversal (RFR). RuvA specifically binds to HJ cruciform DNA, conferring on it an open structure. The RuvB hexamer acts as an ATP-dependent pump, pulling dsDNA into and through the RuvAB complex. HJ branch migration allows RuvC to scan DNA until it finds its consensus sequence, where it cleaves and resolves the cruciform DNA. This is Holliday junction branch migration complex subunit RuvA from Endomicrobium trichonymphae.